Here is an 859-residue protein sequence, read N- to C-terminus: MDQKYNPQAIESKWQKIWHQQKTFATPENLGDKETFYLLVMFPYPSGRIHMGHVRNYAIGDVIARYQRMQGKAVLHPMGWDAFGMPAENAAAQRKVHPRDWTYENIATMREELKSMGLSYDWDREFATCDEDYAHAEQVLFLRLYEKGLVYRKHAFVNWDPVDHTVLANEQVIDGCGWRSGAPVEQRELNQWFFRITHYADELLDNLQHMDGWPETVRTMQTNWIGKSHGVEFAFALEGYPGTLPVYTTRPDTLMGVTFCSVAAEHPIAAAVAENNPAAAAFIKTCQGVGTSEEALEKLEKKGFDTGIKAIHPITGESLPVYIANFVLMSYGTGAVMAVPAHDQRDFEFAKKHGIEIKVVIQPEGQTLHAEQLSEAYTGPGRLVNSGLFTGMDNEQAKQRVAEYFEAQGIGKGTINYRLRDWGISRQRYWGNPIPMVHCAACGVVPVPVAQLPIQLPNEVDFSEPGNPLERHPSWKTCDCPQCGQPARRETDTMDTFMESSWYFLRYCSPHMGGVPLDKAAVDRWMPVNQYVGGIEHAVLHLLYARFFHKALRDIGEVSCDEPFARLLTQGMVRKDTHRCAQHGWRYPKEVQERDGALYCIECGGAVTVGRNEKMSKSKHNVVDPNDLIAGYGADTARLFMLFAAPADRDLEWNDSGVDGAWRFLGRVWRLVLAAIERCGERQACTTTPADEQLKAFRSQLHNTIVKVTEDLNRQSFNTAIAAVMEMSNGAIATFKGEDRLTGEASALLWETAQVTVKLLHPYAPHMTEELWQRMGEQSLLSDTPWPLADAAALVKERVLIVIQVNGKLRSKLEVPVDMAQEAIEKLALADEHVKVQTEGKTIRKVVVVPGRLVNIVAN.

The short motif at Pro-43–His-53 is the 'HIGH' region element. The 'KMSKS' region signature appears at Lys-614–Ser-618. Lys-617 provides a ligand contact to ATP.

This sequence belongs to the class-I aminoacyl-tRNA synthetase family.

It localises to the cytoplasm. It catalyses the reaction tRNA(Leu) + L-leucine + ATP = L-leucyl-tRNA(Leu) + AMP + diphosphate. In Magnetococcus marinus (strain ATCC BAA-1437 / JCM 17883 / MC-1), this protein is Leucine--tRNA ligase.